The chain runs to 306 residues: Ribonuclease Z (306 aa).

Zn(2+)-binding residues include His63, His65, Asp67, His68, His140, Asp211, and His269. The Proton acceptor role is filled by Asp67.

It belongs to the RNase Z family. In terms of assembly, homodimer. Requires Zn(2+) as cofactor.

It carries out the reaction Endonucleolytic cleavage of RNA, removing extra 3' nucleotides from tRNA precursor, generating 3' termini of tRNAs. A 3'-hydroxy group is left at the tRNA terminus and a 5'-phosphoryl group is left at the trailer molecule.. Zinc phosphodiesterase, which displays some tRNA 3'-processing endonuclease activity. Probably involved in tRNA maturation, by removing a 3'-trailer from precursor tRNA. This chain is Ribonuclease Z, found in Listeria monocytogenes serotype 4a (strain HCC23).